Reading from the N-terminus, the 231-residue chain is Cytidylate kinase (231 aa).

12–20 (GPSGAGKGT) lines the ATP pocket.

It belongs to the cytidylate kinase family. Type 1 subfamily.

It localises to the cytoplasm. It catalyses the reaction CMP + ATP = CDP + ADP. It carries out the reaction dCMP + ATP = dCDP + ADP. The protein is Cytidylate kinase of Shewanella amazonensis (strain ATCC BAA-1098 / SB2B).